The sequence spans 599 residues: Sulfite reductase [NADPH] flavoprotein alpha-component (599 aa).

Residues Ile-64–Val-202 enclose the Flavodoxin-like domain. Residues Ser-70–Ala-75, Ser-117–Gly-120, and Leu-153–Cys-162 each bind FMN. Residues Asp-234 to Pro-448 form the FAD-binding FR-type domain. Residues Thr-322, Ala-356, Arg-386–Ser-389, Thr-404–Gly-406, Tyr-410, and Gly-419–Ser-422 each bind FAD. Residues Ser-519 to Arg-520, Lys-525 to Gln-529, and Asp-561 each bind NADP(+). An FAD-binding site is contributed by Tyr-599.

The protein belongs to the NADPH-dependent sulphite reductase flavoprotein subunit CysJ family. In the N-terminal section; belongs to the flavodoxin family. It in the C-terminal section; belongs to the flavoprotein pyridine nucleotide cytochrome reductase family. Alpha(8)-beta(8). The alpha component is a flavoprotein, the beta component is a hemoprotein. The cofactor is FAD. FMN is required as a cofactor.

The enzyme catalyses hydrogen sulfide + 3 NADP(+) + 3 H2O = sulfite + 3 NADPH + 4 H(+). Its pathway is sulfur metabolism; hydrogen sulfide biosynthesis; hydrogen sulfide from sulfite (NADPH route): step 1/1. In terms of biological role, component of the sulfite reductase complex that catalyzes the 6-electron reduction of sulfite to sulfide. This is one of several activities required for the biosynthesis of L-cysteine from sulfate. The flavoprotein component catalyzes the electron flow from NADPH -&gt; FAD -&gt; FMN to the hemoprotein component. In Escherichia coli (strain K12), this protein is Sulfite reductase [NADPH] flavoprotein alpha-component.